The sequence spans 261 residues: Carnitinyl-CoA dehydratase (261 aa).

E111 (nucleophile) is an active-site residue. E131 (proton acceptor) is an active-site residue.

This sequence belongs to the enoyl-CoA hydratase/isomerase family.

The enzyme catalyses (R)-carnitinyl-CoA = crotonobetainyl-CoA + H2O. It participates in amine and polyamine metabolism; carnitine metabolism. Functionally, catalyzes the reversible dehydration of L-carnitinyl-CoA to crotonobetainyl-CoA. The chain is Carnitinyl-CoA dehydratase from Salmonella enteritidis PT4 (strain P125109).